The sequence spans 139 residues: Ribulose bisphosphate carboxylase small subunit (139 aa).

The protein belongs to the RuBisCO small chain family. In terms of assembly, heterohexadecamer of 8 large and 8 small subunits.

The protein resides in the plastid. The protein localises to the chloroplast. Functionally, ruBisCO catalyzes two reactions: the carboxylation of D-ribulose 1,5-bisphosphate, the primary event in carbon dioxide fixation, as well as the oxidative fragmentation of the pentose substrate in the photorespiration process. Both reactions occur simultaneously and in competition at the same active site. Although the small subunit is not catalytic it is essential for maximal activity. In Detonula confervacea (Marine diatom), this protein is Ribulose bisphosphate carboxylase small subunit.